A 241-amino-acid polypeptide reads, in one-letter code: 1-(5-phosphoribosyl)-5-[(5-phosphoribosylamino)methylideneamino] imidazole-4-carboxamide isomerase (241 aa).

The Proton acceptor role is filled by Asp10. The active-site Proton donor is the Asp131.

The protein belongs to the HisA/HisF family.

The protein localises to the cytoplasm. The catalysed reaction is 1-(5-phospho-beta-D-ribosyl)-5-[(5-phospho-beta-D-ribosylamino)methylideneamino]imidazole-4-carboxamide = 5-[(5-phospho-1-deoxy-D-ribulos-1-ylimino)methylamino]-1-(5-phospho-beta-D-ribosyl)imidazole-4-carboxamide. Its pathway is amino-acid biosynthesis; L-histidine biosynthesis; L-histidine from 5-phospho-alpha-D-ribose 1-diphosphate: step 4/9. The protein is 1-(5-phosphoribosyl)-5-[(5-phosphoribosylamino)methylideneamino] imidazole-4-carboxamide isomerase of Bifidobacterium longum subsp. infantis (strain ATCC 15697 / DSM 20088 / JCM 1222 / NCTC 11817 / S12).